Reading from the N-terminus, the 234-residue chain is Ankyrin repeat-containing protein C6C3.08 (234 aa).

5 ANK repeats span residues 36–66 (DKRTPLHWACSVGKVNTIYFLLKQPNIKPDE), 70–100 (AGWTPLMISINNRSVPDNVIEELINRSDVDP), 106–135 (GGQTCLHYAAGKGRLSIVQLLCDKAPELIR), 140–169 (QGQTPLHRAAAVGKIQVVKYLISQRAPLNT), and 173–203 (YGFTPLHFALAEGHPDVGVELVRAGADTLRK).

The protein is Ankyrin repeat-containing protein C6C3.08 of Schizosaccharomyces pombe (strain 972 / ATCC 24843) (Fission yeast).